The primary structure comprises 186 residues: ADP-ribosylation factor-like protein alp41 (186 aa).

Glycine 2 is lipidated: N-myristoyl glycine. GTP is bound by residues 23–30 (GLDNAGKT), 66–70 (DIGGQ), and 125–128 (NKSD).

The protein belongs to the small GTPase superfamily. Arf family.

The protein localises to the cytoplasm. It localises to the cytoskeleton. Functionally, has a role in the cofactor-dependent pathway of microtubule biogenesis. Required for growth polarity control. The protein is ADP-ribosylation factor-like protein alp41 (alp41) of Schizosaccharomyces pombe (strain 972 / ATCC 24843) (Fission yeast).